Consider the following 292-residue polypeptide: Claudin-23 (292 aa).

Residues 1 to 3 are Cytoplasmic-facing; sequence MRT. The helical transmembrane segment at 4-24 threads the bilayer; that stretch reads PVVMTLGMVLAPCGLLLNLTG. The Extracellular portion of the chain corresponds to 25-81; that stretch reads TLAPGWRLVKGFLNQPVDVELYQGLWDMCREQSSRERECGQTDQWGYFEAQPVLVAR. A helical membrane pass occupies residues 82–102; sequence ALMVTSLAATVLGLLLASLGV. Topologically, residues 103-110 are cytoplasmic; that stretch reads RCWQDEPN. Residues 111 to 131 traverse the membrane as a helical segment; sequence FVLAGLSGVVLFVAGLLGLIP. Residues 132–160 lie on the Extracellular side of the membrane; sequence VSWYNHFLGDRDVLPAPASPVTVQVSYSL. The helical transmembrane segment at 161–181 threads the bilayer; the sequence is VLGYLGSCLLLLGGFSLALSF. At 182–292 the chain is on the cytoplasmic side; that stretch reads APWCDERCRR…DSSLPCDSDL (111 aa). The tract at residues 222-292 is disordered; sequence KYYSDGQHRP…DSSLPCDSDL (71 aa). The span at 273 to 282 shows a compositional bias: polar residues; sequence DAPSCSTHPC.

The protein belongs to the claudin family. Expressed in germinal center B-cells, placenta, stomach as well as in colon tumor.

Its subcellular location is the cell junction. The protein resides in the tight junction. It is found in the cell membrane. In terms of biological role, plays a major role in tight junction-specific obliteration of the intercellular space, through calcium-independent cell-adhesion activity. The sequence is that of Claudin-23 (CLDN23) from Homo sapiens (Human).